We begin with the raw amino-acid sequence, 338 residues long: Ketol-acid reductoisomerase (NADP(+)) (338 aa).

The KARI N-terminal Rossmann domain occupies 1–181; that stretch reads MQVYYDKDCD…GGGRTGIIET (181 aa). NADP(+) is bound by residues 24-27, R47, S50, S52, and 82-85; these read YGSQ and DEFQ. Residue H107 is part of the active site. NADP(+) is bound at residue G133. Residues 182 to 327 form the KARI C-terminal knotted domain; that stretch reads TFKDETETDL…EKLRGMMPWI (146 aa). The Mg(2+) site is built by D190, E194, E226, and E230. S251 serves as a coordination point for substrate.

The protein belongs to the ketol-acid reductoisomerase family. Mg(2+) serves as cofactor.

It carries out the reaction (2R)-2,3-dihydroxy-3-methylbutanoate + NADP(+) = (2S)-2-acetolactate + NADPH + H(+). The catalysed reaction is (2R,3R)-2,3-dihydroxy-3-methylpentanoate + NADP(+) = (S)-2-ethyl-2-hydroxy-3-oxobutanoate + NADPH + H(+). Its pathway is amino-acid biosynthesis; L-isoleucine biosynthesis; L-isoleucine from 2-oxobutanoate: step 2/4. The protein operates within amino-acid biosynthesis; L-valine biosynthesis; L-valine from pyruvate: step 2/4. Involved in the biosynthesis of branched-chain amino acids (BCAA). Catalyzes an alkyl-migration followed by a ketol-acid reduction of (S)-2-acetolactate (S2AL) to yield (R)-2,3-dihydroxy-isovalerate. In the isomerase reaction, S2AL is rearranged via a Mg-dependent methyl migration to produce 3-hydroxy-3-methyl-2-ketobutyrate (HMKB). In the reductase reaction, this 2-ketoacid undergoes a metal-dependent reduction by NADPH to yield (R)-2,3-dihydroxy-isovalerate. This Alcanivorax borkumensis (strain ATCC 700651 / DSM 11573 / NCIMB 13689 / SK2) protein is Ketol-acid reductoisomerase (NADP(+)).